A 585-amino-acid polypeptide reads, in one-letter code: A-type ATP synthase subunit A (585 aa).

Position 231 to 238 (231 to 238 (GPFGSGKT)) interacts with ATP.

It belongs to the ATPase alpha/beta chains family. As to quaternary structure, has multiple subunits with at least A(3), B(3), C, D, E, F, H, I and proteolipid K(x).

It is found in the cell membrane. The catalysed reaction is ATP + H2O + 4 H(+)(in) = ADP + phosphate + 5 H(+)(out). Component of the A-type ATP synthase that produces ATP from ADP in the presence of a proton gradient across the membrane. The A chain is the catalytic subunit. This is A-type ATP synthase subunit A from Desulfurococcus sp. (strain SY).